Reading from the N-terminus, the 144-residue chain is Ribosomal RNA large subunit methyltransferase H (144 aa).

Residues leucine 63, glycine 92, and 111 to 116 (LSPLTF) each bind S-adenosyl-L-methionine.

This sequence belongs to the RNA methyltransferase RlmH family. As to quaternary structure, homodimer.

It localises to the cytoplasm. It catalyses the reaction pseudouridine(1915) in 23S rRNA + S-adenosyl-L-methionine = N(3)-methylpseudouridine(1915) in 23S rRNA + S-adenosyl-L-homocysteine + H(+). Functionally, specifically methylates the pseudouridine at position 1915 (m3Psi1915) in 23S rRNA. The chain is Ribosomal RNA large subunit methyltransferase H from Synechococcus sp. (strain CC9902).